The sequence spans 713 residues: MFPHEEKLIRERLGREPNEVEKAMLEVMWSEHASYKSSRPFLKLLPTENEHVVLGPGEDAGIVKFDDETWIAVGIESHNHPSAVEPYGGAATGVGGIVRDILCMGARPIALLDPIRFGPLEKERNRYLLQGVVKGIADYGNRIGVPTVGGETEFDESLDNYTLVNVACVGIMRPEHFVHSYVEEAGLKLVLVGNRTGRDGIHGVTFASEELSENAEEEDRSAVQIPDPFTEKLLIEATLEAVYTGKVRALKDLGGGGLTCASSEMAGKKGFGAVIYADRVPLREPNMTPTEVMISESQERMLFAVREEDVEEIGKIFEKYGLEWTVVGEIIKEPRYIVYWKGEKVADLPIDLLTEVPTIEWETRPYSLERDVETPKISFSDAFELVWSSPNVLNKRWVWEQYDHEVQGRTVVKPGRDAAVLKINERYGLAFVADGNPNHSHLNPYHGAMGAVAEVVRNLVSVGAEPLALVDNLNFASPERPEVYWSFAETVRGLADAARAFGLAYVSGNVSFYNEVVDRPIKPTPVVAGLGKVELEKIPGFGLEEGLLIGVVGSTKRELGGSELYVRLGLKGGIAPRVNLEEEKANAEGILEAIRRGLLKAVHDVSKGGIAVALAEMAVLGNTGFTADLSKVPAETSNPLEVAFSESHGRYIVVFPEERLEELKALFRHFAVIGRAGGSGAVFLWNGDELLRKPITKLREVHESFPKLLGEEE.

H32 is an active-site residue. Y35 provides a ligand contact to ATP. Residue E76 participates in Mg(2+) binding. Substrate is bound by residues 77–80 (SHNH) and R99. H78 acts as the Proton acceptor in catalysis. D100 contacts Mg(2+). Q224 provides a ligand contact to substrate. Mg(2+) is bound at residue D252. 296–298 (ESQ) lines the substrate pocket. The ATP site is built by D471 and G508. N509 contributes to the Mg(2+) binding site. Substrate is bound at residue S511.

It belongs to the FGAMS family. As to quaternary structure, monomer. Part of the FGAM synthase complex composed of 1 PurL, 1 PurQ and 2 PurS subunits.

The protein localises to the cytoplasm. The enzyme catalyses N(2)-formyl-N(1)-(5-phospho-beta-D-ribosyl)glycinamide + L-glutamine + ATP + H2O = 2-formamido-N(1)-(5-O-phospho-beta-D-ribosyl)acetamidine + L-glutamate + ADP + phosphate + H(+). It participates in purine metabolism; IMP biosynthesis via de novo pathway; 5-amino-1-(5-phospho-D-ribosyl)imidazole from N(2)-formyl-N(1)-(5-phospho-D-ribosyl)glycinamide: step 1/2. In terms of biological role, part of the phosphoribosylformylglycinamidine synthase complex involved in the purines biosynthetic pathway. Catalyzes the ATP-dependent conversion of formylglycinamide ribonucleotide (FGAR) and glutamine to yield formylglycinamidine ribonucleotide (FGAM) and glutamate. The FGAM synthase complex is composed of three subunits. PurQ produces an ammonia molecule by converting glutamine to glutamate. PurL transfers the ammonia molecule to FGAR to form FGAM in an ATP-dependent manner. PurS interacts with PurQ and PurL and is thought to assist in the transfer of the ammonia molecule from PurQ to PurL. The chain is Phosphoribosylformylglycinamidine synthase subunit PurL from Thermococcus kodakarensis (strain ATCC BAA-918 / JCM 12380 / KOD1) (Pyrococcus kodakaraensis (strain KOD1)).